Reading from the N-terminus, the 270-residue chain is tRNA pseudouridine synthase A (270 aa).

Residue Asp-51 is the Nucleophile of the active site. Tyr-109 is a substrate binding site.

This sequence belongs to the tRNA pseudouridine synthase TruA family. In terms of assembly, homodimer.

The enzyme catalyses uridine(38/39/40) in tRNA = pseudouridine(38/39/40) in tRNA. Formation of pseudouridine at positions 38, 39 and 40 in the anticodon stem and loop of transfer RNAs. This chain is tRNA pseudouridine synthase A, found in Burkholderia multivorans (strain ATCC 17616 / 249).